Here is a 146-residue protein sequence, read N- to C-terminus: Single-stranded DNA-binding protein, mitochondrial (146 aa).

The N-terminal 22 residues, 1-22 (MQHTRRMLNPLLTGLRNLPARG), are a transit peptide targeting the mitochondrion. One can recognise an SSB domain in the interval 38-142 (VNTVTILGRV…IIADDVLFFR (105 aa)).

Homotetramer. As to expression, uniformly distributed in the early embryo. High levels detected in the anterior and posterior midgut primordia of stage 12 embryos. In larvae, high levels were detected in proliferating tissues including the CNS and digestive tract. In adults, highly expressed in the CNS, digestive tract and ovary.

It localises to the mitochondrion. Binds preferentially and cooperatively to pyrimidine rich single-stranded DNA (ss-DNA). Required to maintain the copy number of mitochondrial DNA (mtDNA) and plays crucial roles during mtDNA replication that stimulate activity of the gamma complex polymerase PolG1/tam at the replication fork. Promotes PolG1 activity largely by organizing the template DNA and eliminating secondary structures to favor ss-DNA conformations that facilitate PolG1 activity. This is Single-stranded DNA-binding protein, mitochondrial (mtSSB) from Drosophila melanogaster (Fruit fly).